The primary structure comprises 748 residues: Polyribonucleotide nucleotidyltransferase (748 aa).

The Mg(2+) site is built by aspartate 487 and aspartate 493. In terms of domain architecture, KH spans 554-613 (PSTTTIKIDKDKIRDIIGPSGKVIKEICETSGAKIDISDDGTVSVYASDRDKLKVALDKI). One can recognise an S1 motif domain in the interval 623–691 (GEIFNGTVVK…NKGKAKLTIK (69 aa)). Residues 693-733 (ADKDKSSNNTKPKTHVNNTKDNSEPEQRRDSSKKRAWNEDN) are disordered. A compositionally biased stretch (polar residues) spans 699–712 (SNNTKPKTHVNNTK). A compositionally biased stretch (basic and acidic residues) spans 713–722 (DNSEPEQRRD).

Belongs to the polyribonucleotide nucleotidyltransferase family. Mg(2+) is required as a cofactor.

It is found in the cytoplasm. It carries out the reaction RNA(n+1) + phosphate = RNA(n) + a ribonucleoside 5'-diphosphate. Involved in mRNA degradation. Catalyzes the phosphorolysis of single-stranded polyribonucleotides processively in the 3'- to 5'-direction. The sequence is that of Polyribonucleotide nucleotidyltransferase from Rickettsia peacockii (strain Rustic).